We begin with the raw amino-acid sequence, 852 residues long: Genome polyprotein (852 aa).

Short sequence motifs ((L)YPX(n)L motif) lie at residues 167-171 and 200-205; these read YPHGL and YPVWEL. The interval 766 to 836 is involved in P1-2A pentamerization; the sequence is MMSRIAAGDL…PRKMKGLFSQ (71 aa).

The protein belongs to the picornaviridae polyprotein family. In terms of assembly, homodimer. Homomultimer; probably interacts with membranes in a multimeric form. Seems to assemble into amyloid-like fibers. Homopentamer. Homooligomer. As to quaternary structure, interacts with capsid protein VP2. Interacts with capsid protein VP3. In terms of assembly, interacts with capsid protein VP1. Interacts with capsid protein VP3. Interacts with capsid protein VP1. Interacts with capsid protein VP2. In terms of processing, specific enzymatic cleavages by viral protease in vivo yield a variety of precursors and mature proteins. Polyprotein processing intermediates are produced, such as P1-2A which is a functional precursor of the structural proteins, VP0 which is a VP4-VP2 precursor, VP1-2A precursor, 3ABC precursor which is a stable and catalytically active precursor of 3A, 3B and 3C proteins, 3AB and 3CD precursors. The assembly signal 2A is removed from VP1-2A by a host protease, possibly host Cathepsin L. This cleavage occurs over a region of 3 amino-acids probably generating VP1 proteins with heterogeneous C-termini. Post-translationally, during virion maturation, immature virions are rendered infectious following cleavage of VP0 into VP4 and VP2. This maturation seems to be an autocatalytic event triggered by the presence of RNA in the capsid and is followed by a conformational change of the particle. The assembly signal 2A is removed from VP1-2A by a host protease, possibly host Cathepsin L in naked virions. This cleavage does not occur in enveloped virions. This cleavage occurs over a region of 3 amino-acids probably generating VP1 proteins with heterogeneous C-termini. In terms of processing, viral protein genome-linked: VPg is uridylylated prior to priming replication into VPg-pUpU. Post-translationally, unlike other picornaviruses, does not seem to be myristoylated.

It is found in the virion. It localises to the host endosome. The protein localises to the host multivesicular body. Its subcellular location is the host membrane. Capsid proteins VP1, VP2, and VP3 form a closed capsid enclosing the viral positive strand RNA genome. All these proteins contain a beta-sheet structure called beta-barrel jelly roll. Together they form an icosahedral capsid (T=3) composed of 60 copies of each VP1, VP2, and VP3, with a diameter of approximately 300 Angstroms. VP1 is situated at the 12 fivefold axes, whereas VP2 and VP3 are located at the quasi-sixfold axes. The naked capsid interacts with the host receptor HAVCR1 to provide virion attachment to and probably entry into the target cell. In terms of biological role, VP0 precursor is a component of the immature procapsids. Functionally, plays a role in the assembly of the 12 pentamers into an icosahedral structure. Has not been detected in mature virions, supposedly owing to its small size. Its function is as follows. Precursor component of immature procapsids that corresponds to an extended form of the structural protein VP1. After maturation, possibly by the host Cathepsin L, the assembly signal 2A is cleaved to give rise to the mature VP1 protein. Affects membrane integrity and causes an increase in membrane permeability. In terms of biological role, functions as a viroporin. Affects membrane integrity and causes an increase in membrane permeability. Involved in host intracellular membrane rearrangements probably to give rise to the viral factories. Does not disrupt calcium homeostasis or glycoprotein trafficking. Antagonizes the innate immune response of the host by suppressing IFN-beta synthesis, which it achieves by interfering with the RIG-I/IFIH1 pathway. This chain is Genome polyprotein, found in Cercopithecus hamlyni (Owl-faced monkey).